A 450-amino-acid polypeptide reads, in one-letter code: Phosphoglucosamine mutase (450 aa).

Ser101 acts as the Phosphoserine intermediate in catalysis. 4 residues coordinate Mg(2+): Ser101, Asp240, Asp242, and Asp244. Ser101 bears the Phosphoserine mark.

It belongs to the phosphohexose mutase family. Requires Mg(2+) as cofactor. Post-translationally, activated by phosphorylation.

It carries out the reaction alpha-D-glucosamine 1-phosphate = D-glucosamine 6-phosphate. Its function is as follows. Catalyzes the conversion of glucosamine-6-phosphate to glucosamine-1-phosphate. The polypeptide is Phosphoglucosamine mutase (Streptococcus uberis (strain ATCC BAA-854 / 0140J)).